The primary structure comprises 164 residues: SsrA-binding protein (164 aa).

The segment at 141–164 (KLHDKRQDEKQKSIKREINSALKR) is disordered. Residues 145–158 (KRQDEKQKSIKREI) are compositionally biased toward basic and acidic residues.

Belongs to the SmpB family.

Its subcellular location is the cytoplasm. Its function is as follows. Required for rescue of stalled ribosomes mediated by trans-translation. Binds to transfer-messenger RNA (tmRNA), required for stable association of tmRNA with ribosomes. tmRNA and SmpB together mimic tRNA shape, replacing the anticodon stem-loop with SmpB. tmRNA is encoded by the ssrA gene; the 2 termini fold to resemble tRNA(Ala) and it encodes a 'tag peptide', a short internal open reading frame. During trans-translation Ala-aminoacylated tmRNA acts like a tRNA, entering the A-site of stalled ribosomes, displacing the stalled mRNA. The ribosome then switches to translate the ORF on the tmRNA; the nascent peptide is terminated with the 'tag peptide' encoded by the tmRNA and targeted for degradation. The ribosome is freed to recommence translation, which seems to be the essential function of trans-translation. This chain is SsrA-binding protein, found in Prochlorococcus marinus (strain MIT 9215).